An 85-amino-acid polypeptide reads, in one-letter code: Cytochrome c2 (85 aa).

Residues cysteine 12, cysteine 15, histidine 16, and methionine 61 each contribute to the heme c site.

Belongs to the cytochrome c family. Post-translationally, binds 1 heme c group covalently per subunit.

Functionally, cytochrome c2 is found mainly in purple, non-sulfur, photosynthetic bacteria where it functions as the electron donor to the oxidized bacteriochlorophyll in the photophosphorylation pathway. However, it may also have a role in the respiratory chain and is found in some non-photosynthetic bacteria. This chain is Cytochrome c2, found in Rubrivivax gelatinosus (Rhodocyclus gelatinosus).